A 438-amino-acid chain; its full sequence is Ribosomal protein uS12 methylthiotransferase RimO (438 aa).

An MTTase N-terminal domain is found at 1-116 (MNVGFISLGC…IWKEIENLLD (116 aa)). Positions 10, 46, 79, 147, 151, and 154 each coordinate [4Fe-4S] cluster. Positions 133 to 363 (TTGSNMAYLK…MALQEKISRE (231 aa)) constitute a Radical SAM core domain. In terms of domain architecture, TRAM spans 366–435 (EQKVGNVYKV…DYDLFGELYT (70 aa)).

It belongs to the methylthiotransferase family. RimO subfamily. Requires [4Fe-4S] cluster as cofactor.

The protein resides in the cytoplasm. The catalysed reaction is L-aspartate(89)-[ribosomal protein uS12]-hydrogen + (sulfur carrier)-SH + AH2 + 2 S-adenosyl-L-methionine = 3-methylsulfanyl-L-aspartate(89)-[ribosomal protein uS12]-hydrogen + (sulfur carrier)-H + 5'-deoxyadenosine + L-methionine + A + S-adenosyl-L-homocysteine + 2 H(+). Functionally, catalyzes the methylthiolation of an aspartic acid residue of ribosomal protein uS12. The chain is Ribosomal protein uS12 methylthiotransferase RimO from Alkaliphilus oremlandii (strain OhILAs) (Clostridium oremlandii (strain OhILAs)).